We begin with the raw amino-acid sequence, 395 residues long: Zinc-regulated GTPase metalloprotein activator 1B (395 aa).

Residues 1-36 are disordered; it reads MLPAVGSADEEEDPAEEDCPELVPMETTQSEEEEKS. The span at 8 to 20 shows a compositional bias: acidic residues; the sequence is ADEEEDPAEEDCP. Residues 17 to 24 carry the psi-PxLVp motif motif; that stretch reads EDCPELVP. Position 49-56 (49-56) interacts with GTP; it reads GYLGAGKT. Positions 107, 109, and 110 each coordinate Zn(2+). Residues 107–110 carry the CXCC motif motif; the sequence is CLCC. GTP is bound by residues 110–114 and 203–206; these read CSVKD and NKTD. The CobW C-terminal domain occupies 274-377; sequence IVTITFEVPG…ILKQLFIATV (104 aa).

Belongs to the SIMIBI class G3E GTPase family. ZNG1 subfamily.

It is found in the nucleus. It carries out the reaction GTP + H2O = GDP + phosphate + H(+). Functionally, zinc chaperone that directly transfers zinc cofactor to target metalloproteins, thereby activating them. Catalyzes zinc insertion into the active site of methionine aminopeptidase METAP1, which function to cleave the initiator methionine from polypeptides during or after protein translation. Mechanistically, the N-terminal psi-PxLVp motif binds to the C6H2-type zinc finger of inactive form of METAP1. After formation of the docked complex, zinc is transferred from the CXCC motif in the GTPase domain of ZNG1B to the zinc binding site in the peptidase domain of METAP1 in a process requiring GTP hydrolysis. GTP/GDP exchange is required for release of active METAP1. The polypeptide is Zinc-regulated GTPase metalloprotein activator 1B (Homo sapiens (Human)).